The sequence spans 121 residues: Large ribosomal subunit protein uL18 (121 aa).

Belongs to the universal ribosomal protein uL18 family. Part of the 50S ribosomal subunit; part of the 5S rRNA/L5/L18/L25 subcomplex. Contacts the 5S and 23S rRNAs.

This is one of the proteins that bind and probably mediate the attachment of the 5S RNA into the large ribosomal subunit, where it forms part of the central protuberance. In Methylibium petroleiphilum (strain ATCC BAA-1232 / LMG 22953 / PM1), this protein is Large ribosomal subunit protein uL18.